The sequence spans 210 residues: Small ribosomal subunit protein uS3 (210 aa).

A KH type-2 domain is found at 38–106 (LRSFLKKRLY…EVYLNIQEVR (69 aa)).

Belongs to the universal ribosomal protein uS3 family. Part of the 30S ribosomal subunit. Forms a tight complex with proteins S10 and S14.

Binds the lower part of the 30S subunit head. Binds mRNA in the 70S ribosome, positioning it for translation. This chain is Small ribosomal subunit protein uS3, found in Geotalea uraniireducens (strain Rf4) (Geobacter uraniireducens).